We begin with the raw amino-acid sequence, 392 residues long: Y' element ATP-dependent helicase YFL066C (392 aa).

The Helicase ATP-binding domain occupies 1–175; it reads MADTPSVAVQ…LQRIGLTGLA (175 aa). 11-18 serves as a coordination point for ATP; the sequence is APPGYGKT. Positions 232–381 constitute a Helicase C-terminal domain; it reads KLLLALFEIE…EFYGLESKKG (150 aa).

It belongs to the helicase family. Yeast subtelomeric Y' repeat subfamily.

Its function is as follows. Catalyzes DNA unwinding and is involved in telomerase-independent telomere maintenance. The sequence is that of Y' element ATP-dependent helicase YFL066C from Saccharomyces cerevisiae (strain ATCC 204508 / S288c) (Baker's yeast).